Reading from the N-terminus, the 178-residue chain is ATP-dependent protease subunit HslV (178 aa).

Thr-7 is an active-site residue. The Na(+) site is built by Gly-162, Cys-165, and Thr-168.

It belongs to the peptidase T1B family. HslV subfamily. A double ring-shaped homohexamer of HslV is capped on each side by a ring-shaped HslU homohexamer. The assembly of the HslU/HslV complex is dependent on binding of ATP.

Its subcellular location is the cytoplasm. It carries out the reaction ATP-dependent cleavage of peptide bonds with broad specificity.. Allosterically activated by HslU binding. Protease subunit of a proteasome-like degradation complex believed to be a general protein degrading machinery. The protein is ATP-dependent protease subunit HslV of Burkholderia cenocepacia (strain ATCC BAA-245 / DSM 16553 / LMG 16656 / NCTC 13227 / J2315 / CF5610) (Burkholderia cepacia (strain J2315)).